Reading from the N-terminus, the 455-residue chain is 1-deoxy-D-xylulose 5-phosphate reductoisomerase (455 aa).

6 residues coordinate NADPH: T30, G31, S32, I33, Q63, and N159. K160 contributes to the 1-deoxy-D-xylulose 5-phosphate binding site. E161 serves as a coordination point for NADPH. D185 provides a ligand contact to Mn(2+). 1-deoxy-D-xylulose 5-phosphate-binding residues include S186 and E187. E187 is a binding site for Mn(2+). Over residues 205–214 the composition is skewed to polar residues; sequence YATAKQSIQP. Residues 205–233 form a disordered region; sequence YATAKQSIQPESVRATDPPSSTTDSPAKT. 1-deoxy-D-xylulose 5-phosphate is bound by residues S246 and H269. G275 contributes to the NADPH binding site. 4 residues coordinate 1-deoxy-D-xylulose 5-phosphate: S282, N287, K288, and E291. E291 provides a ligand contact to Mn(2+).

Belongs to the DXR family. The cofactor is Mg(2+). It depends on Mn(2+) as a cofactor.

It carries out the reaction 2-C-methyl-D-erythritol 4-phosphate + NADP(+) = 1-deoxy-D-xylulose 5-phosphate + NADPH + H(+). The protein operates within isoprenoid biosynthesis; isopentenyl diphosphate biosynthesis via DXP pathway; isopentenyl diphosphate from 1-deoxy-D-xylulose 5-phosphate: step 1/6. In terms of biological role, catalyzes the NADPH-dependent rearrangement and reduction of 1-deoxy-D-xylulose-5-phosphate (DXP) to 2-C-methyl-D-erythritol 4-phosphate (MEP). This is 1-deoxy-D-xylulose 5-phosphate reductoisomerase from Rhodopirellula baltica (strain DSM 10527 / NCIMB 13988 / SH1).